The sequence spans 302 residues: Ribosomal RNA small subunit methyltransferase H (302 aa).

S-adenosyl-L-methionine contacts are provided by residues 36 to 38, Asp56, Phe84, Asp99, and Gln106; that span reads GGH.

It belongs to the methyltransferase superfamily. RsmH family.

Its subcellular location is the cytoplasm. It catalyses the reaction cytidine(1402) in 16S rRNA + S-adenosyl-L-methionine = N(4)-methylcytidine(1402) in 16S rRNA + S-adenosyl-L-homocysteine + H(+). In terms of biological role, specifically methylates the N4 position of cytidine in position 1402 (C1402) of 16S rRNA. This is Ribosomal RNA small subunit methyltransferase H from Flavobacterium johnsoniae (strain ATCC 17061 / DSM 2064 / JCM 8514 / BCRC 14874 / CCUG 350202 / NBRC 14942 / NCIMB 11054 / UW101) (Cytophaga johnsonae).